The chain runs to 250 residues: NADH-quinone oxidoreductase subunit C (250 aa).

Belongs to the complex I 30 kDa subunit family. In terms of assembly, NDH-1 is composed of 14 different subunits. Subunits NuoB, C, D, E, F, and G constitute the peripheral sector of the complex.

The protein localises to the cell inner membrane. The enzyme catalyses a quinone + NADH + 5 H(+)(in) = a quinol + NAD(+) + 4 H(+)(out). NDH-1 shuttles electrons from NADH, via FMN and iron-sulfur (Fe-S) centers, to quinones in the respiratory chain. The immediate electron acceptor for the enzyme in this species is believed to be ubiquinone. Couples the redox reaction to proton translocation (for every two electrons transferred, four hydrogen ions are translocated across the cytoplasmic membrane), and thus conserves the redox energy in a proton gradient. In Xylella fastidiosa (strain M23), this protein is NADH-quinone oxidoreductase subunit C.